We begin with the raw amino-acid sequence, 208 residues long: Thymidylate kinase (208 aa).

11 to 18 is a binding site for ATP; sequence GIEGAGKT.

The protein belongs to the thymidylate kinase family.

The catalysed reaction is dTMP + ATP = dTDP + ADP. Phosphorylation of dTMP to form dTDP in both de novo and salvage pathways of dTTP synthesis. In Hahella chejuensis (strain KCTC 2396), this protein is Thymidylate kinase.